Consider the following 479-residue polypeptide: ATP synthase subunit beta (479 aa).

ATP is bound at residue 153-160; sequence GGAGVGKT.

It belongs to the ATPase alpha/beta chains family. In terms of assembly, F-type ATPases have 2 components, CF(1) - the catalytic core - and CF(0) - the membrane proton channel. CF(1) has five subunits: alpha(3), beta(3), gamma(1), delta(1), epsilon(1). CF(0) has three main subunits: a(1), b(2) and c(9-12). The alpha and beta chains form an alternating ring which encloses part of the gamma chain. CF(1) is attached to CF(0) by a central stalk formed by the gamma and epsilon chains, while a peripheral stalk is formed by the delta and b chains.

Its subcellular location is the cell membrane. The enzyme catalyses ATP + H2O + 4 H(+)(in) = ADP + phosphate + 5 H(+)(out). In terms of biological role, produces ATP from ADP in the presence of a proton gradient across the membrane. The catalytic sites are hosted primarily by the beta subunits. In Lactobacillus helveticus (strain DPC 4571), this protein is ATP synthase subunit beta.